Here is a 173-residue protein sequence, read N- to C-terminus: Shikimate kinase (173 aa).

11 to 16 (GAGKTT) is an ATP binding site. Residue Thr15 participates in Mg(2+) binding. Substrate contacts are provided by Asp33, Arg57, and Gly79. Arg118 serves as a coordination point for ATP. Arg140 provides a ligand contact to substrate.

The protein belongs to the shikimate kinase family. As to quaternary structure, monomer. The cofactor is Mg(2+).

It is found in the cytoplasm. The catalysed reaction is shikimate + ATP = 3-phosphoshikimate + ADP + H(+). It functions in the pathway metabolic intermediate biosynthesis; chorismate biosynthesis; chorismate from D-erythrose 4-phosphate and phosphoenolpyruvate: step 5/7. Catalyzes the specific phosphorylation of the 3-hydroxyl group of shikimic acid using ATP as a cosubstrate. In Parabacteroides distasonis (strain ATCC 8503 / DSM 20701 / CIP 104284 / JCM 5825 / NCTC 11152), this protein is Shikimate kinase.